The primary structure comprises 158 residues: HVA22-like protein f (158 aa).

3 consecutive transmembrane segments (helical) span residues 2-22, 41-61, and 63-83; these read GFIIAIAKRFDALVGPGVMLL, QQWLTYWIIYSLITIFELSVW, and VLAWLPFWPYLKLLFCMWLVL.

This sequence belongs to the DP1 family.

The protein resides in the membrane. This is HVA22-like protein f (HVA22F) from Arabidopsis thaliana (Mouse-ear cress).